The primary structure comprises 433 residues: Histone acetyltransferase type B subunit 2 (433 aa).

WD repeat units lie at residues 134–174 (NHDG…NTPS), 187–227 (GQHK…KPNN), 237–277 (GHTA…SAPK), 282–322 (AHTG…VKLH), and 326–366 (SHTD…QEQT). The segment at 368–372 (DDAED) is interaction with the histone H4 N-terminus. Residues 383-433 (GHTSRPTDLAWSPHMEWALTSAAEDNIVMVWRPSKAVIDTGNEELTPDDLE) form a WD 6 repeat.

Belongs to the WD repeat RBAP46/RBAP48/MSI1 family. As to quaternary structure, component of the HAT-B complex composed of at least HAT1 and HAT2. The HAT-B complex binds to histone H4 tail.

Its subcellular location is the cytoplasm. It is found in the nucleus. In terms of biological role, regulatory subunit of the histone acetylase B (HAT-B) complex. The complex acetylates 'Lys-12' of histone H4 which is required for telomeric silencing. This chain is Histone acetyltransferase type B subunit 2 (HAT2), found in Mycosarcoma maydis (Corn smut fungus).